Here is a 128-residue protein sequence, read N- to C-terminus: Putative pre-16S rRNA nuclease (128 aa).

This sequence belongs to the YqgF nuclease family.

The protein localises to the cytoplasm. Could be a nuclease involved in processing of the 5'-end of pre-16S rRNA. The polypeptide is Putative pre-16S rRNA nuclease (Sulfurovum sp. (strain NBC37-1)).